The chain runs to 185 residues: Peptidyl-tRNA hydrolase (185 aa).

Tyr-14 provides a ligand contact to tRNA. The Proton acceptor role is filled by His-19. Positions 64, 66, and 112 each coordinate tRNA.

This sequence belongs to the PTH family. Monomer.

It localises to the cytoplasm. The enzyme catalyses an N-acyl-L-alpha-aminoacyl-tRNA + H2O = an N-acyl-L-amino acid + a tRNA + H(+). Functionally, hydrolyzes ribosome-free peptidyl-tRNAs (with 1 or more amino acids incorporated), which drop off the ribosome during protein synthesis, or as a result of ribosome stalling. In terms of biological role, catalyzes the release of premature peptidyl moieties from peptidyl-tRNA molecules trapped in stalled 50S ribosomal subunits, and thus maintains levels of free tRNAs and 50S ribosomes. This Latilactobacillus sakei subsp. sakei (strain 23K) (Lactobacillus sakei subsp. sakei) protein is Peptidyl-tRNA hydrolase.